Consider the following 227-residue polypeptide: Ribonuclease 3 (227 aa).

One can recognise an RNase III domain in the interval 4 to 133 (FEELEKLLDY…LIAAIYLDSD (130 aa)). Glu-46 contacts Mg(2+). Asp-50 is an active-site residue. Residues Asn-119 and Glu-122 each coordinate Mg(2+). Residue Glu-122 is part of the active site. Residues 158–226 (DPKTALQEWA…ARELLHKLKL (69 aa)) enclose the DRBM domain.

This sequence belongs to the ribonuclease III family. In terms of assembly, homodimer. Mg(2+) serves as cofactor.

It localises to the cytoplasm. It catalyses the reaction Endonucleolytic cleavage to 5'-phosphomonoester.. Functionally, digests double-stranded RNA. Involved in the processing of primary rRNA transcript to yield the immediate precursors to the large and small rRNAs (23S and 16S). Processes some mRNAs, and tRNAs when they are encoded in the rRNA operon. Processes pre-crRNA and tracrRNA of type II CRISPR loci if present in the organism. The sequence is that of Ribonuclease 3 from Rickettsia bellii (strain OSU 85-389).